Consider the following 840-residue polypeptide: Protein translocase subunit SecA (840 aa).

ATP-binding positions include Q87, 105-109 (GEGKT), and D494. The segment at 791–840 (LRKEQEDQPMFFGPAEGAGQKPQTRKDRKVGRNDPCPCGSGKKYKKCCGK) is disordered. Positions 826, 828, 837, and 838 each coordinate Zn(2+).

The protein belongs to the SecA family. As to quaternary structure, monomer and homodimer. Part of the essential Sec protein translocation apparatus which comprises SecA, SecYEG and auxiliary proteins SecDF-YajC and YidC. It depends on Zn(2+) as a cofactor.

The protein localises to the cell inner membrane. Its subcellular location is the cytoplasm. The enzyme catalyses ATP + H2O + cellular proteinSide 1 = ADP + phosphate + cellular proteinSide 2.. Functionally, part of the Sec protein translocase complex. Interacts with the SecYEG preprotein conducting channel. Has a central role in coupling the hydrolysis of ATP to the transfer of proteins into and across the cell membrane, serving as an ATP-driven molecular motor driving the stepwise translocation of polypeptide chains across the membrane. The protein is Protein translocase subunit SecA of Syntrophobacter fumaroxidans (strain DSM 10017 / MPOB).